A 1029-amino-acid polypeptide reads, in one-letter code: MQYTQLQTLTNYSFLKSASHPQELVEEAKILGYHALAITDECSLAGIVKAHVAAKELNLKLLVGSYFELTNGFKIIAIAPNRQAYAELSGFISLARRRASKGEYEAHLSDLRFRLQQCLIIWLPYFNNHISDVDVTTLATAFKQRLWIGVSHTLIAAEQRLFSHLNKLANALHVPLVASGLTYMHNKNCKPLLDILTAIRENTPIQQLGTRLHSNAEVNLKPLHELNQLYPEALIQQTQVIAQLCNFSLDELRYQYPKELVPSNTTPIAHLKKLVKEGEAKRWPQGTPEHAQKIIAMELGLIEEMQYEYYFLTVHDIVHFARSKNILCQGRGSAANSVVCYCLFITEIAPGQINVLFERFISKERNEPPDIDVDFEHQRREEVIQYIYQKYGRERAALAATVITYRSRSAIRDVGKAMGLEAGLVGQLAKSLAWWDRTGDLIKRMESFGLNPETQKTMQHFFALVQQILGFPRHLSQHVGGFIITQDKVSDLVPLENASMPDRTIIQWDKYDIEAMGLLKVDVLALGMLTALRKSLETVSQYDAAVYSLATIPREDPATYAMLSKGDSIGVFQVESRAQMSMLPRLRPKCFYDLVIEIAIVRPGPIQGDMVHPYLRRRDGIEEVHYQNDKIKSVLEPTLGIPIFQEQAIRLAMVAADFSGGEADQLRRAMASWGKNGSLLKFEDKFIQGMLNNGYPLDFAHRLFEQIKGFGGYGFPESHSASFALLCYASSWLKCHHPAAFYCALLNSQPMGFYSASQLIQDARRHKVVVLPVEVNASGYESHVVLTNHNTSAPPNIIQLGLHMIKGLSILTAERIVLAKGDKPFTTLKELSLRAQLSSADLQLLASADALHKLTGNRHNSRWQAAALMPHSPLLDGAELEEDALNTPAPSIEKNIQTDFNSTGLSLRLHPMALLRAQQPFNRCKKQSELASIHNGGFAQVAGLVTGRQRPGTAKGTLFLTLEDETGNINIVVWTSTQERCRQALLTAKLLLVKGRLETKDNVTHIIAGQMFDYSHMLSEFDIKSRDFH.

Belongs to the DNA polymerase type-C family. DnaE2 subfamily.

It localises to the cytoplasm. It carries out the reaction DNA(n) + a 2'-deoxyribonucleoside 5'-triphosphate = DNA(n+1) + diphosphate. DNA polymerase involved in damage-induced mutagenesis and translesion synthesis (TLS). It is not the major replicative DNA polymerase. This Saccharophagus degradans (strain 2-40 / ATCC 43961 / DSM 17024) protein is Error-prone DNA polymerase.